The chain runs to 491 residues: MSETSKSESLDPEVSEGLCSKTLMQSIVHELKLQMRIGLPLVVMNLLWFGKMTTTSVFLGRQGELNLAGGSLGFSFANVTGFSVLYGISAAMEPICGQAFGAKNFKLLHKTLFMAVLLLLLISVPISFLWLNVHKILTGFGQREDISFIAKKYLLYLLPELPILSFLCPLKAYLSSQGVTLPIMFTTAAATSLHIPINIVLSKARGIEGVAMAVWITDFIVVILLTGYVIVVERMKENKWKQGGWLNQSAQDWLTLIKLSGPCCLTVCLEWWCYEILVLLTGRLPNPVQAVSILIIVFNFDYLLYAVMLSLGTCVATRVSNELGANNPKGAYRAAYTTLIVGIISGCIGALVMIAFRGFWGSLYTHHDQLILNGVKKMMLIMAVIEVVNFPLMVCGEIVRGTAKPSLGMYANLSGFYLLALPLGATLAFKAKQGLQGFLIGLFVGISLCLSILLIFIARIDWEKEAGKAQILTCNTEDEQTSQGSGQDSHS.

12 helical membrane passes run 39 to 59 (LPLV…SVFL), 72 to 92 (LGFS…SAAM), 111 to 131 (TLFM…FLWL), 154 to 174 (LLYL…KAYL), 181 to 201 (LPIM…NIVL), 212 to 232 (MAVW…VIVV), 261 to 281 (GPCC…VLLT), 291 to 311 (VSIL…MLSL), 336 to 356 (YTTL…MIAF), 379 to 399 (MLIM…GEIV), 409 to 429 (MYAN…TLAF), and 438 to 458 (FLIG…IFIA).

This sequence belongs to the multi antimicrobial extrusion (MATE) (TC 2.A.66.1) family. In terms of assembly, interacts with BCA4 and HT1. In terms of tissue distribution, preferentially expressed in guard cells.

The protein localises to the cell membrane. Functionally, could function as a HCO(3)(-) -sensing component in the CO(2) signaling pathway in guard cells. Acts as an upstream repressor of HT1. Plays a role in stomatal response to CO(2). This chain is Protein DETOXIFICATION 56, found in Arabidopsis thaliana (Mouse-ear cress).